Consider the following 441-residue polypeptide: Protein kinase C and casein kinase substrate in neurons protein 1 (441 aa).

Residues Ser-2 and Ser-76 each carry the phosphoserine modification. Positions 10–280 (EEITDSFWEV…AIRGADAQED (271 aa)) constitute an F-BAR domain. The stretch at 23 to 272 (KRTVKRIDDG…HVYRELEQAI (250 aa)) forms a coiled coil. Phosphothreonine is present on Thr-181. The disordered stretch occupies residues 297 to 380 (PQFEEWNPDL…ANGGANPFED (84 aa)). A compositionally biased stretch (basic and acidic residues) spans 311–321 (AKKEKQPKKAE). A compositionally biased stretch (polar residues) spans 324 to 355 (TLSNATGAVESTSQAGDRGSVSSYDRGQTYAT). 5 positions are modified to phosphoserine: Ser-343, Ser-345, Ser-346, Ser-358, and Ser-362. The SH3 domain maps to 382–441 (AKGVRVRALYDYDGQEQDELSFKAGDELTKLGEEDEQGWCRGRLDSGQLGLYPANYVEAI). Phosphotyrosine is present on Tyr-391. 2 positions are modified to phosphoserine: Ser-402 and Ser-427.

This sequence belongs to the PACSIN family. As to quaternary structure, homodimer. May form heterooligomers with other PACSINs. Interacts with both COBL and DBNL. Identified in a complex composed of COBL, PACSIN1 and WASL. Interacts with EHD3. Interacts (via SH3 domain) with SYNJ1 and WASL. Interacts (via SH3 domain) with DNM1; the interaction is reduced by DNM1 phosphorylation. Interacts with DNM2 and DNM3. Interacts with MAPT. Interacts with EHD1. Interacts with TRPV4. Phosphorylated by casein kinase 2 (CK2) and protein kinase C (PKC). In terms of tissue distribution, highly expressed in brain. Detected in hippocampus and dorsal root ganglion neurons. Detected in rod photoreceptor terminals in the outer plexiform layer of the retina (at protein level). In CNS neurons, high levels in the pyramidal cells of the hippocampus, Purkinje cells of the cerebellum and large neurons of the cortex and brain stem.

The protein resides in the cytoplasm. Its subcellular location is the cell projection. The protein localises to the synapse. It is found in the synaptosome. It localises to the ruffle membrane. The protein resides in the membrane. Its subcellular location is the cytoplasmic vesicle membrane. The protein localises to the cytosol. It is found in the cell membrane. In terms of biological role, binds to membranes via its F-BAR domain and mediates membrane tubulation. Plays a role in the reorganization of the microtubule cytoskeleton via its interaction with MAPT; this decreases microtubule stability and inhibits MAPT-induced microtubule polymerization. Plays a role in cellular transport processes by recruiting DNM1, DNM2 and DNM3 to membranes. Plays a role in the reorganization of the actin cytoskeleton and in neuron morphogenesis via its interaction with COBL and WASL, and by recruiting COBL to the cell cortex. Plays a role in the regulation of neurite formation, neurite branching and the regulation of neurite length. Required for normal synaptic vesicle endocytosis; this process retrieves previously released neurotransmitters to accommodate multiple cycles of neurotransmission. Required for normal excitatory and inhibitory synaptic transmission. This is Protein kinase C and casein kinase substrate in neurons protein 1 (Pacsin1) from Mus musculus (Mouse).